Here is a 456-residue protein sequence, read N- to C-terminus: Dolichyl-diphosphooligosaccharide--protein glycosyltransferase 48 kDa subunit (456 aa).

Residues 1–42 (MGYFRCARAGSFGRRRKMEPSTAARAWALFWLLLPLLGAVCA) form the signal peptide. Topologically, residues 43-427 (SGPRTLVLLD…YERFIPSAYP (385 aa)) are lumenal. Residues 428-447 (YYASAFSMMLGLFIFSIVFL) form a helical membrane-spanning segment. The Cytoplasmic segment spans residues 448-456 (HMKEKEKSD).

Belongs to the DDOST 48 kDa subunit family. In terms of assembly, component of the oligosaccharyltransferase (OST) complex. OST exists in two different complex forms which contain common core subunits RPN1, RPN2, OST48, OST4, DAD1 and TMEM258, either STT3A or STT3B as catalytic subunits, and form-specific accessory subunits. STT3A complex assembly occurs through the formation of 3 subcomplexes. Subcomplex 1 contains RPN1 and TMEM258, subcomplex 2 contains the STT3A-specific subunits STT3A, DC2/OSTC, and KCP2 as well as the core subunit OST4, and subcomplex 3 contains RPN2, DAD1, and OST48. The STT3A complex can form stable complexes with the Sec61 complex or with both the Sec61 and TRAP complexes. Interacts with SMIM22.

The protein localises to the endoplasmic reticulum membrane. It functions in the pathway protein modification; protein glycosylation. In terms of biological role, subunit of the oligosaccharyl transferase (OST) complex that catalyzes the initial transfer of a defined glycan (Glc(3)Man(9)GlcNAc(2) in eukaryotes) from the lipid carrier dolichol-pyrophosphate to an asparagine residue within an Asn-X-Ser/Thr consensus motif in nascent polypeptide chains, the first step in protein N-glycosylation. N-glycosylation occurs cotranslationally and the complex associates with the Sec61 complex at the channel-forming translocon complex that mediates protein translocation across the endoplasmic reticulum (ER). All subunits are required for a maximal enzyme activity. Required for the assembly of both SST3A- and SS3B-containing OST complexes. The chain is Dolichyl-diphosphooligosaccharide--protein glycosyltransferase 48 kDa subunit from Homo sapiens (Human).